A 211-amino-acid chain; its full sequence is Tudor-interacting repair regulator protein (211 aa).

Residues K10 and K151 each participate in a glycyl lysine isopeptide (Lys-Gly) (interchain with G-Cter in ubiquitin) cross-link. The interval 118–205 (TLEQLHAVEI…TEKQKKALEK (88 aa)) is interaction with PXN.

Belongs to the Nudix hydrolase family. TIRR subfamily. As to quaternary structure, homodimer. Interacts with TP53BP1 (via the Tudor-like domain); interaction is abolished following DNA damage and TP53BP1 phosphorylation by ATM. Interacts (via the cytoplasmic part) with SDC4. Interacts with TGFB1I1 and PXN.

The protein localises to the nucleus. Key regulator of TP53BP1 required to stabilize TP53BP1 and regulate its recruitment to chromatin. In absence of DNA damage, interacts with the tandem Tudor-like domain of TP53BP1, masking the region that binds histone H4 dimethylated at 'Lys-20' (H4K20me2), thereby preventing TP53BP1 recruitment to chromatin and maintaining TP53BP1 localization to the nucleus. Following DNA damage, ATM-induced phosphorylation of TP53BP1 and subsequent recruitment of RIF1 leads to dissociate NUDT16L1/TIRR from TP53BP1, unmasking the tandem Tudor-like domain and allowing recruitment of TP53BP1 to DNA double strand breaks (DSBs). Binds U8 snoRNA. In Homo sapiens (Human), this protein is Tudor-interacting repair regulator protein.